Reading from the N-terminus, the 877-residue chain is ABC transporter A family member 1 (877 aa).

The next 7 membrane-spanning stretches (helical) occupy residues 46-66 (YFST…LFLI), 268-288 (VWGG…LLYK), 324-344 (ILIS…FFLG), 347-367 (FFVL…VAFF), 379-399 (IGIG…FSGM), 420-440 (IILF…IGNV), and 479-499 (LLAL…IIPG). The ABC transporter domain occupies 552–788 (LIICGLSKSY…YGEGYSVNIV (237 aa)). 591–598 (GSNGCGKS) provides a ligand contact to ATP.

It belongs to the ABC transporter superfamily. ABCA family.

Its subcellular location is the membrane. In Dictyostelium discoideum (Social amoeba), this protein is ABC transporter A family member 1 (abcA1).